The sequence spans 201 residues: Small ribosomal subunit protein uS2 (201 aa).

The protein belongs to the universal ribosomal protein uS2 family.

The polypeptide is Small ribosomal subunit protein uS2 (Nanoarchaeum equitans (strain Kin4-M)).